We begin with the raw amino-acid sequence, 251 residues long: MINQYFQKINEHLELVLSHEKDNLKKAAHMVSEAIQNGGIVQLFGCGHSHILTEEVFYRAGGLVPVKPIFVEPLMLHEGAVRSSMLERMNDLAQNFINHEDIRPEDVFFVLSTSGRNPVPIDVALAAKEKGAYTIAITSLEYSKSQPSRHKSGRLLYEVVDLVIDNHCVRGDAILAHPNVSVPFAPTSTVIGSAILNAVFAEAIVLMAENGIEPPIFLSGNIEGADEHNRRWVEKYKERIPVLVEGHQLSQ.

The SIS domain occupies 31–214; that stretch reads VSEAIQNGGI…VLMAENGIEP (184 aa).

It belongs to the UPF0309 family.

The chain is UPF0309 protein GK1441 from Geobacillus kaustophilus (strain HTA426).